Reading from the N-terminus, the 205-residue chain is ATP-dependent Clp protease proteolytic subunit (205 aa).

The active-site Nucleophile is serine 109. The active site involves histidine 134.

It belongs to the peptidase S14 family. In terms of assembly, fourteen ClpP subunits assemble into 2 heptameric rings which stack back to back to give a disk-like structure with a central cavity, resembling the structure of eukaryotic proteasomes.

The protein resides in the cytoplasm. It carries out the reaction Hydrolysis of proteins to small peptides in the presence of ATP and magnesium. alpha-casein is the usual test substrate. In the absence of ATP, only oligopeptides shorter than five residues are hydrolyzed (such as succinyl-Leu-Tyr-|-NHMec, and Leu-Tyr-Leu-|-Tyr-Trp, in which cleavage of the -Tyr-|-Leu- and -Tyr-|-Trp bonds also occurs).. Its function is as follows. Cleaves peptides in various proteins in a process that requires ATP hydrolysis. Has a chymotrypsin-like activity. Plays a major role in the degradation of misfolded proteins. This chain is ATP-dependent Clp protease proteolytic subunit, found in Baumannia cicadellinicola subsp. Homalodisca coagulata.